A 134-amino-acid chain; its full sequence is Arsenate reductase (134 aa).

Catalysis depends on nucleophile residues Cys11, Cys83, and Cys90. Cystine bridges form between Cys11-Cys83 and Cys83-Cys90.

It belongs to the low molecular weight phosphotyrosine protein phosphatase family. Thioredoxin-coupled ArsC subfamily.

It is found in the cytoplasm. It catalyses the reaction arsenate + [thioredoxin]-dithiol + H(+) = arsenite + [thioredoxin]-disulfide + H2O. Catalyzes the reduction of arsenate [As(V)] to arsenite [As(III)]. In Bacillus anthracis (strain A0248), this protein is Arsenate reductase.